The following is a 215-amino-acid chain: Pyrrolidone-carboxylate peptidase (215 aa).

Active-site residues include E80, C143, and H167.

The protein belongs to the peptidase C15 family. As to quaternary structure, homotetramer.

The protein resides in the cytoplasm. It catalyses the reaction Release of an N-terminal pyroglutamyl group from a polypeptide, the second amino acid generally not being Pro.. In terms of biological role, removes 5-oxoproline from various penultimate amino acid residues except L-proline. The polypeptide is Pyrrolidone-carboxylate peptidase (Yersinia pseudotuberculosis serotype O:1b (strain IP 31758)).